Consider the following 344-residue polypeptide: GTPase Obg (344 aa).

The span at 1–12 (MFVDSASFSVSS) shows a compositional bias: polar residues. The segment at 1-36 (MFVDSASFSVSSGKGGPGCASFRREKHVPLGGPDGG) is disordered. The Obg domain maps to 1 to 158 (MFVDSASFSV…RNIRLELKLI (158 aa)). An OBG-type G domain is found at 159–341 (ADVGLVGFPN…LKFGLLEILK (183 aa)). Residues 165-172 (GFPNVGKS), 190-194 (FTTLT), 212-215 (DIPG), 280-283 (TRLD), and 322-324 (SSV) contribute to the GTP site. The Mg(2+) site is built by Ser-172 and Thr-192.

Belongs to the TRAFAC class OBG-HflX-like GTPase superfamily. OBG GTPase family. As to quaternary structure, monomer. Mg(2+) is required as a cofactor.

The protein localises to the cytoplasm. Its function is as follows. An essential GTPase which binds GTP, GDP and possibly (p)ppGpp with moderate affinity, with high nucleotide exchange rates and a fairly low GTP hydrolysis rate. Plays a role in control of the cell cycle, stress response, ribosome biogenesis and in those bacteria that undergo differentiation, in morphogenesis control. The chain is GTPase Obg from Campylobacter fetus subsp. fetus (strain 82-40).